Reading from the N-terminus, the 263-residue chain is Glutamate racemase (263 aa).

Residues 10–11 (DS) and 42–43 (YG) each bind substrate. C73 functions as the Proton donor/acceptor in the catalytic mechanism. Position 74–75 (74–75 (NS)) interacts with substrate. The active-site Proton donor/acceptor is C183. A substrate-binding site is contributed by 184-185 (TH).

The protein belongs to the aspartate/glutamate racemases family.

The enzyme catalyses L-glutamate = D-glutamate. It functions in the pathway cell wall biogenesis; peptidoglycan biosynthesis. Provides the (R)-glutamate required for cell wall biosynthesis. The polypeptide is Glutamate racemase (Acidothermus cellulolyticus (strain ATCC 43068 / DSM 8971 / 11B)).